The chain runs to 304 residues: UDP-3-O-acyl-N-acetylglucosamine deacetylase (304 aa).

Residues His-78, His-237, and Asp-241 each contribute to the Zn(2+) site. His-264 functions as the Proton donor in the catalytic mechanism.

It belongs to the LpxC family. Zn(2+) is required as a cofactor.

The catalysed reaction is a UDP-3-O-[(3R)-3-hydroxyacyl]-N-acetyl-alpha-D-glucosamine + H2O = a UDP-3-O-[(3R)-3-hydroxyacyl]-alpha-D-glucosamine + acetate. Its pathway is glycolipid biosynthesis; lipid IV(A) biosynthesis; lipid IV(A) from (3R)-3-hydroxytetradecanoyl-[acyl-carrier-protein] and UDP-N-acetyl-alpha-D-glucosamine: step 2/6. In terms of biological role, catalyzes the hydrolysis of UDP-3-O-myristoyl-N-acetylglucosamine to form UDP-3-O-myristoylglucosamine and acetate, the committed step in lipid A biosynthesis. The chain is UDP-3-O-acyl-N-acetylglucosamine deacetylase from Acidithiobacillus ferrooxidans (strain ATCC 53993 / BNL-5-31) (Leptospirillum ferrooxidans (ATCC 53993)).